The following is a 292-amino-acid chain: Ubiquinone biosynthesis protein UbiV (292 aa).

[4Fe-4S] cluster-binding residues include Cys-39, Cys-180, Cys-193, and Cys-197.

It belongs to the peptidase U32 family. UbiV subfamily. Forms a heterodimer with UbiU. It depends on [4Fe-4S] cluster as a cofactor.

It functions in the pathway cofactor biosynthesis; ubiquinone biosynthesis. In terms of biological role, required for O(2)-independent ubiquinone (coenzyme Q) biosynthesis. Together with UbiU, is essential for the C6-hydroxylation reaction in the oxygen-independent ubiquinone biosynthesis pathway. This chain is Ubiquinone biosynthesis protein UbiV, found in Escherichia coli (strain K12).